The following is a 148-amino-acid chain: Probable calcium-binding protein CML7 (148 aa).

3 consecutive EF-hand domains span residues 9–44 (EQVA…LGGN), 80–115 (PFDR…IGEK), and 116–148 (LEPH…IVAK). Ca(2+) contacts are provided by aspartate 22, aspartate 24, aspartate 26, arginine 28, glutamate 33, aspartate 93, aspartate 95, serine 97, threonine 99, and aspartate 104.

Its function is as follows. Potential calcium sensor. This Oryza sativa subsp. japonica (Rice) protein is Probable calcium-binding protein CML7 (CML7).